We begin with the raw amino-acid sequence, 201 residues long: Ribonuclease HII (201 aa).

The region spanning 12–201 (DLVAGVDEVG…VRELLDVPVQ (190 aa)) is the RNase H type-2 domain. Positions 18, 19, and 110 each coordinate a divalent metal cation.

The protein belongs to the RNase HII family. Mn(2+) serves as cofactor. Requires Mg(2+) as cofactor.

It is found in the cytoplasm. It carries out the reaction Endonucleolytic cleavage to 5'-phosphomonoester.. Its function is as follows. Endonuclease that specifically degrades the RNA of RNA-DNA hybrids. This chain is Ribonuclease HII, found in Pseudomonas aeruginosa (strain UCBPP-PA14).